Reading from the N-terminus, the 272-residue chain is Hydroxyethylthiazole kinase (272 aa).

A substrate-binding site is contributed by methionine 46. Positions 122 and 168 each coordinate ATP. Residue glycine 195 coordinates substrate.

It belongs to the Thz kinase family. Requires Mg(2+) as cofactor.

The catalysed reaction is 5-(2-hydroxyethyl)-4-methylthiazole + ATP = 4-methyl-5-(2-phosphooxyethyl)-thiazole + ADP + H(+). Its pathway is cofactor biosynthesis; thiamine diphosphate biosynthesis; 4-methyl-5-(2-phosphoethyl)-thiazole from 5-(2-hydroxyethyl)-4-methylthiazole: step 1/1. Functionally, catalyzes the phosphorylation of the hydroxyl group of 4-methyl-5-beta-hydroxyethylthiazole (THZ). The polypeptide is Hydroxyethylthiazole kinase (Alkaliphilus metalliredigens (strain QYMF)).